Reading from the N-terminus, the 364-residue chain is Peptide chain release factor 2 (364 aa).

Residue glutamine 251 is modified to N5-methylglutamine.

Belongs to the prokaryotic/mitochondrial release factor family. Post-translationally, methylated by PrmC. Methylation increases the termination efficiency of RF2.

It localises to the cytoplasm. Its function is as follows. Peptide chain release factor 2 directs the termination of translation in response to the peptide chain termination codons UGA and UAA. The polypeptide is Peptide chain release factor 2 (Sulfurovum sp. (strain NBC37-1)).